A 175-amino-acid polypeptide reads, in one-letter code: NADH dehydrogenase [ubiquinone] iron-sulfur protein 4, mitochondrial (175 aa).

The transit peptide at methionine 1 to leucine 42 directs the protein to the mitochondrion. The segment at glutamate 149–lysine 175 is disordered.

It belongs to the complex I NDUFS4 subunit family. As to quaternary structure, mammalian complex I is composed of 45 different subunits. This is a component of the iron-sulfur (IP) fragment of the enzyme. Interacts with BCAP31 and TOMM40; the interaction mediates its translocation to the mitochondria; the interaction with BCAP31 is direct.

The protein resides in the mitochondrion inner membrane. In terms of biological role, accessory subunit of the mitochondrial membrane respiratory chain NADH dehydrogenase (Complex I), that is believed not to be involved in catalysis. Complex I functions in the transfer of electrons from NADH to the respiratory chain. The immediate electron acceptor for the enzyme is believed to be ubiquinone. The chain is NADH dehydrogenase [ubiquinone] iron-sulfur protein 4, mitochondrial (NDUFS4) from Pan troglodytes (Chimpanzee).